Here is a 438-residue protein sequence, read N- to C-terminus: Mannose-1-phosphate guanylyltransferase regulatory subunit alpha (438 aa).

The substrate-binding domain stretch occupies residues leucine 2–alanine 260. GDP-alpha-D-mannose-binding residues include glutamate 87 and glutamine 256. Residues leucine 282–leucine 438 form a hexapeptide repeat domain region. Residues threonine 373 to isoleucine 402 are C-loop.

The protein belongs to the transferase hexapeptide repeat family. Component of the GMPPA-GMPPB mannose-1-phosphate guanylyltransferase complex composed of 4 GMPPA subunits and 8 GMPPB subunits; the complex is organized into three layers, a central layer made up of 2 GMPPA dimers sandwiched between two layers each made up of 2 GMPPB dimers.

Functionally, regulatory subunit of the GMPPA-GMPPB mannose-1-phosphate guanylyltransferase complex; reduces the catalytic activity of GMPPB when part of the complex. Mediates allosteric feedback inhibition of GMPPB catalytic activity upon binding GDP-alpha-D-mannose. Together with GMPPB regulates GDP-alpha-D-mannose levels. The sequence is that of Mannose-1-phosphate guanylyltransferase regulatory subunit alpha from Drosophila melanogaster (Fruit fly).